The following is a 770-amino-acid chain: U3 small nucleolar RNA-associated protein 14 homolog A (770 aa).

Residues 1–17 (MNANQAAESNLLASNQQ) are compositionally biased toward polar residues. Residues 1–65 (MNANQAAESN…GKDRQKLADR (65 aa)) form a disordered region. Ser-30, Ser-32, and Ser-53 each carry phosphoserine. Positions 41–68 (ERKHQKLLESISSLNGKDRQKLADRSEA) form a coiled coil. A compositionally biased stretch (basic and acidic residues) spans 56 to 65 (GKDRQKLADR). Phosphoserine occurs at positions 78 and 82. Thr-206 carries the phosphothreonine modification. 2 coiled-coil regions span residues 217-291 (SLEE…DKAR) and 318-348 (LEAR…EEEG). Disordered regions lie at residues 334–361 (LTQK…LVPD), 392–455 (KDLE…SSQE), and 467–505 (LRTE…RPER). Composition is skewed to acidic residues over residues 343–358 (ESEE…EEPL) and 396–410 (DPAE…ESEE). A phosphoserine mark is found at Ser-406 and Ser-408. The span at 411-444 (EKAVVEEETLLKEFEERRSLRQKSELNHMAEPVH) shows a compositional bias: basic and acidic residues. A Glycyl lysine isopeptide (Lys-Gly) (interchain with G-Cter in SUMO2) cross-link involves residue Lys-449. Ser-453 bears the Phosphoserine mark. At Ser-567 the chain carries Phosphoserine. Position 588 is a citrulline (Arg-588). Lys-732 is covalently cross-linked (Glycyl lysine isopeptide (Lys-Gly) (interchain with G-Cter in SUMO2)).

Belongs to the UTP14 family. Interacts with DHX37. Citrullinated by PADI4.

The protein resides in the nucleus. Its subcellular location is the nucleolus. Its function is as follows. May be required for ribosome biogenesis. The polypeptide is U3 small nucleolar RNA-associated protein 14 homolog A (UTP14A) (Bos taurus (Bovine)).